The sequence spans 134 residues: Transmembrane protein 100 (134 aa).

Positions 1-24 are disordered; the sequence is MTEEPTKENLGGPKSPTPVTMEKS. Position 15 is a phosphoserine (Ser15). 2 helical membrane-spanning segments follow: residues 56–76 and 84–104; these read CIIP…AVAY and VISI…ASSA. Ser121 carries the phosphoserine modification.

As to quaternary structure, interacts (via C-terminus) with TRPA1 and TRPV1. Interacts with TASOR.

The protein localises to the cell membrane. The protein resides in the membrane. Its subcellular location is the perikaryon. It is found in the cytoplasm. It localises to the perinuclear region. The protein localises to the endoplasmic reticulum. Its function is as follows. Plays a role during embryonic arterial endothelium differentiation and vascular morphogenesis through the ACVRL1 receptor-dependent signaling pathway upon stimulation by bone morphogenetic proteins, such as GDF2/BMP9 and BMP10. Involved in the regulation of nociception, acting as a modulator of the interaction between TRPA1 and TRPV1, two molecular sensors and mediators of pain signals in dorsal root ganglia (DRG) neurons. Mechanistically, it weakens their interaction, thereby releasing the inhibition of TRPA1 by TRPV1 and increasing the single-channel open probability of the TRPA1-TRPV1 complex. This Rattus norvegicus (Rat) protein is Transmembrane protein 100 (Tmem100).